The sequence spans 430 residues: MKVQLLKIPSHLIVAGSSWLSKIIIAGVQLASISYLISMLGEEKYAIFSLLTGLLVWCSAVDFGIGTGLQNYISECRAKNKSYDAYIKSALHLSFIAIIFFIALFYIFSGVISAKYLSSFHEVLQDKTRMLFFTSCLVFSSIGIGAIAYKILFAELVGWKANLLNALSYMIGMLGLLYIYYRGISVDIKLSLIVLYLPVGMISLCYIVYRYIKLYHVKTTKSHYIAILRRSSGFFLFTLLSIVVLQTDYMVISQRLTPADIVQYTVTMKIFGLVFFIYTAILQALWPICAELRVKQQWKKLNKMIGVNILLGSLYVVGCTIFIYLFKEQIFSVIAKDINYQVSILSFMLIGIYFCIRVWCDTYAMLLQSMNYLKILWILVPLQAIIGGIAQWYFSSTLGISGVLLGLIISFALTVFWGLPLTYLIKANKG.

A run of 12 helical transmembrane segments spans residues 23–39 (IIIA…LISM), 45–61 (YAIF…CSAV), 96–112 (IAII…SGVI), 131–147 (LFFT…IGAI), 163–179 (LLNA…LLYI), 192–208 (LIVL…CYIV), 236–252 (LFTL…YMVI), 266–282 (VTMK…TAIL), 309–325 (ILLG…FIYL), 342–358 (VSIL…CIRV), 373–389 (LKIL…IGGI), and 400–416 (ISGV…LTVF).

It localises to the cell inner membrane. It functions in the pathway bacterial outer membrane biogenesis; LPS O-antigen biosynthesis. In terms of biological role, may be involved in the translocation process of the nascent O-polysaccharide molecules and/or its ligation to lipid A core units. The polypeptide is Putative O-antigen transporter (rfbX) (Salmonella typhimurium (strain LT2 / SGSC1412 / ATCC 700720)).